We begin with the raw amino-acid sequence, 74 residues long: ATP synthase subunit 9, mitochondrial (74 aa).

2 helical membrane passes run 8 to 28 (MGAG…GNVF) and 50 to 70 (ILGF…AFLI).

Belongs to the ATPase C chain family. F-type ATPases have 2 components, CF(1) - the catalytic core - and CF(0) - the membrane proton channel. CF(1) has five subunits: alpha(3), beta(3), gamma(1), delta(1), epsilon(1). CF(0) has three main subunits: a, b and c.

The protein localises to the mitochondrion membrane. This protein is one of the chains of the nonenzymatic membrane component (F0) of mitochondrial ATPase. This chain is ATP synthase subunit 9, mitochondrial (ATP9), found in Solanum tuberosum (Potato).